We begin with the raw amino-acid sequence, 474 residues long: MTQKLHIKTWGCQMNEYDSSKMADLLNSTHGLELTEIPEEADVLLLNTCSIREKAQEKVFHQLGRWKELKKHKPGLVIGVGGCVASQEGEHIRTRAPYVDIIFGPQTLHRLPEMINQIRGGKSSVVDVSFPEIEKFDRLPEPRAEGPTAFVSIMEGCNKYCSFCVVPYTRGEEVSRPVDDVLFEIAQLAEQGVREVNLLGQNVNAYRGATHDDGICTFAELLRLVAAIDGIDRLRFTTSHPIEFTDDIIDVYRDTPELVSFLHLPVQSGSDRVLSMMKRNHTALEYKSIIRKLRAVRPEIQISSDFIVGFPGETAEDFEQTMNLIAQVNFDMSFSFIYSARPGTPAADMPDDVTEEEKKQRLYVLQQRINNQAAQFSRAMLGTEQRVLVEGPSKKDLMELTGRTETNRIVNFVGTPDMIGKFVDIKITDVFTNSLRGEVVRTEEQMGLRVVQSPQMVINRTRKEDELGVGRYHA.

The 118-residue stretch at 3 to 120 (QKLHIKTWGC…LPEMINQIRG (118 aa)) folds into the MTTase N-terminal domain. [4Fe-4S] cluster is bound by residues C12, C49, C83, C157, C161, and C164. In terms of domain architecture, Radical SAM core spans 143-375 (RAEGPTAFVS…QQRINNQAAQ (233 aa)). In terms of domain architecture, TRAM spans 378-441 (RAMLGTEQRV…TNSLRGEVVR (64 aa)).

This sequence belongs to the methylthiotransferase family. MiaB subfamily. Monomer. [4Fe-4S] cluster serves as cofactor.

It localises to the cytoplasm. It carries out the reaction N(6)-dimethylallyladenosine(37) in tRNA + (sulfur carrier)-SH + AH2 + 2 S-adenosyl-L-methionine = 2-methylsulfanyl-N(6)-dimethylallyladenosine(37) in tRNA + (sulfur carrier)-H + 5'-deoxyadenosine + L-methionine + A + S-adenosyl-L-homocysteine + 2 H(+). Its function is as follows. Catalyzes the methylthiolation of N6-(dimethylallyl)adenosine (i(6)A), leading to the formation of 2-methylthio-N6-(dimethylallyl)adenosine (ms(2)i(6)A) at position 37 in tRNAs that read codons beginning with uridine. This chain is tRNA-2-methylthio-N(6)-dimethylallyladenosine synthase, found in Pasteurella multocida (strain Pm70).